Consider the following 330-residue polypeptide: G-protein coupled bile acid receptor 1 (330 aa).

At 1-19 the chain is on the extracellular side; that stretch reads MTPNSTGEVPSPIPKGALG. N4 is a glycosylation site (N-linked (GlcNAc...) asparagine). A helical membrane pass occupies residues 20-40; that stretch reads LSLALASLIITANLLLALGIA. Residues 41–50 lie on the Cytoplasmic side of the membrane; sequence WDRRLRSPPA. A helical membrane pass occupies residues 51-71; it reads GCFFLSLLLAGLLTGLALPTL. At 72-85 the chain is on the extracellular side; that stretch reads PGLWNQSRRGYWSC. N76 carries an N-linked (GlcNAc...) asparagine glycan. A disulfide bridge connects residues C85 and C155. The helical transmembrane segment at 86–106 threads the bilayer; that stretch reads LLVYLAPNFSFLSLLANLLLV. Residues 107–125 lie on the Cytoplasmic side of the membrane; the sequence is HGERYMAVLRPLQPPGSIR. Residues 126–146 traverse the membrane as a helical segment; that stretch reads LALLLTWAGPLLFASLPALGW. Topologically, residues 147 to 165 are extracellular; sequence NHWTPGANCSSQAIFPAPY. The helical transmembrane segment at 166-186 threads the bilayer; it reads LYLEVYGLLLPAVGAAAFLSV. At 187–228 the chain is on the cytoplasmic side; the sequence is RVLATAHRQLQDICRLERAVCRDEPSALARALTWRQARAQAG. The helical transmembrane segment at 229 to 249 threads the bilayer; the sequence is AMLLFGLCWGPYVATLLLSVL. The Extracellular segment spans residues 250–261; that stretch reads AYEQRPPLGPGT. The chain crosses the membrane as a helical span at residues 262–282; sequence LLSLLSLGSASAAAVPVAMGL. Over 283 to 330 the chain is Cytoplasmic; that stretch reads GDQRYTAPWRAAAQRCLQGLWGRASRDSPGPSIAYHPSSQSSVDLDLN. Residues 309–330 are disordered; the sequence is DSPGPSIAYHPSSQSSVDLDLN. Positions 319-330 are enriched in polar residues; sequence PSSQSSVDLDLN.

The protein belongs to the G-protein coupled receptor 1 family. In terms of tissue distribution, ubiquitously expressed. Expressed at higher level in spleen and placenta. Expressed at lower level in other tissues. In digestive tissues, it is expressed in stomach, duodenum, ileocecum, ileum, jejunum, ascending colon, transverse colon, descending colon, cecum and liver, but not in esophagus and rectum.

The protein localises to the cell membrane. Functionally, receptor for bile acid. Bile acid-binding induces its internalization, activation of extracellular signal-regulated kinase and intracellular cAMP production. May be involved in the suppression of macrophage functions by bile acids. The sequence is that of G-protein coupled bile acid receptor 1 (GPBAR1) from Homo sapiens (Human).